Consider the following 126-residue polypeptide: Large ribosomal subunit protein bL12 (126 aa).

The protein belongs to the bacterial ribosomal protein bL12 family. Homodimer. Part of the ribosomal stalk of the 50S ribosomal subunit. Forms a multimeric L10(L12)X complex, where L10 forms an elongated spine to which 2 to 4 L12 dimers bind in a sequential fashion. Binds GTP-bound translation factors.

Forms part of the ribosomal stalk which helps the ribosome interact with GTP-bound translation factors. Is thus essential for accurate translation. This is Large ribosomal subunit protein bL12 from Chlorobaculum tepidum (strain ATCC 49652 / DSM 12025 / NBRC 103806 / TLS) (Chlorobium tepidum).